A 407-amino-acid polypeptide reads, in one-letter code: Arginine deiminase (407 aa).

Residue cysteine 397 is the Amidino-cysteine intermediate of the active site.

This sequence belongs to the arginine deiminase family.

Its subcellular location is the cytoplasm. It carries out the reaction L-arginine + H2O = L-citrulline + NH4(+). Its pathway is amino-acid degradation; L-arginine degradation via ADI pathway; carbamoyl phosphate from L-arginine: step 1/2. The sequence is that of Arginine deiminase from Limosilactobacillus fermentum (strain NBRC 3956 / LMG 18251) (Lactobacillus fermentum).